A 917-amino-acid polypeptide reads, in one-letter code: Glutamate receptor (917 aa).

A signal peptide spans 1-19; sequence MDTCVFPLVVLWISMRITS. At 20-556 the chain is on the extracellular side; the sequence is TLDEVPIGGI…HFFSFMEPLS (537 aa). Residues N62, N95, N121, N125, N229, N251, N261, N272, N418, N419, N424, and N491 are each glycosylated (N-linked (GlcNAc...) asparagine). A helical transmembrane segment spans residues 557–577; that stretch reads SEIWMCIVFAYIGVSVVLFLV. The Cytoplasmic segment spans residues 578–631; the sequence is SRFSPNEWHLSEAHHSYIANDFSISNSLWFSLGAFMQQGCDISPRSMSGRIVGS. The helical transmembrane segment at 632 to 652 threads the bilayer; that stretch reads VWWFFTLIIISSYTANLAAFL. At 653-818 the chain is on the extracellular side; it reads TVERMLTPID…GAQSALTLAN (166 aa). The N-linked (GlcNAc...) asparagine glycan is linked to N775. A helical membrane pass occupies residues 819–839; it reads VAGIFYILIGGLVVAVLSAAF. The Cytoplasmic portion of the chain corresponds to 840-917; that stretch reads EFLYKSRMDS…FEDSNTHTEV (78 aa). A disordered region spans residues 871–896; sequence HIDSEQKTTGNGTRRRSHNSVTYTYT.

The protein belongs to the glutamate-gated ion channel (TC 1.A.10.1) family.

The protein resides in the cell membrane. It localises to the postsynaptic cell membrane. Receptor for glutamate. L-glutamate acts as an excitatory neurotransmitter at many synapses in the central nervous system. The postsynaptic actions of Glu are mediated by a variety of receptors. The sequence is that of Glutamate receptor from Lymnaea stagnalis (Great pond snail).